The chain runs to 736 residues: 1,4-alpha-glucan branching enzyme GlgB (736 aa).

The Nucleophile role is filled by aspartate 415. Residue glutamate 470 is the Proton donor of the active site.

The protein belongs to the glycosyl hydrolase 13 family. GlgB subfamily. Monomer.

The catalysed reaction is Transfers a segment of a (1-&gt;4)-alpha-D-glucan chain to a primary hydroxy group in a similar glucan chain.. It functions in the pathway glycan biosynthesis; glycogen biosynthesis. Its function is as follows. Catalyzes the formation of the alpha-1,6-glucosidic linkages in glycogen by scission of a 1,4-alpha-linked oligosaccharide from growing alpha-1,4-glucan chains and the subsequent attachment of the oligosaccharide to the alpha-1,6 position. The polypeptide is 1,4-alpha-glucan branching enzyme GlgB (Paraburkholderia xenovorans (strain LB400)).